Here is a 445-residue protein sequence, read N- to C-terminus: MYKITKGLDLPISGAPNQVIETAAAAKTVAVIGPDFHGMKPTMLVKEGDKVKKGQIIFTDKKTEGVNYTAPASGTVIEINRGERRVFQSLVIRVEGDESETFTSYSGSELKSLERSKVVDNLVNSGLWTSFRTRPFSKVPEIASVPNSIFVTAIDTNPLAASPEVVLADQAEAFADGLTVLTRLTEGKVFLCKASGAKIPTTSDVTVEEFSGVHPAGLAGTHIHFLDPVNDKKTVWSINYQDVVAIGKLFVTGELSVERVISVAGPQVKKPRLVRTQVGVSLNDLLAGELSEGDNRVISGSVLSGRKAFGPFAYLGRYHNQVSVLLEGRERQMMHYLRAGVEKHSIMNVFLSKLTGKKSFDMTTTTNGSDRTMLPLGNFERVMPLDILPTQLLRALVVNDTEQAQKLGALELDDEDLALCTYSCSGKFEYGPILRDCLTLIEKEG.

This sequence belongs to the NqrA family. As to quaternary structure, composed of six subunits; NqrA, NqrB, NqrC, NqrD, NqrE and NqrF.

The enzyme catalyses a ubiquinone + n Na(+)(in) + NADH + H(+) = a ubiquinol + n Na(+)(out) + NAD(+). Its function is as follows. NQR complex catalyzes the reduction of ubiquinone-1 to ubiquinol by two successive reactions, coupled with the transport of Na(+) ions from the cytoplasm to the periplasm. NqrA to NqrE are probably involved in the second step, the conversion of ubisemiquinone to ubiquinol. This chain is Na(+)-translocating NADH-quinone reductase subunit A, found in Marinomonas sp. (strain MWYL1).